The primary structure comprises 188 residues: MNLGITEVKKGMILKIDNELYSVVKTEFVNPGKGSAFIRTKLKNIVRDSSIERTFKAAEKLESVDLERRKMQYCYADGDQIIFMDVNDYEQIPVSKDYVEDILPFMKEETPVEVAFYNDKPIGVTPPNFAILEVTYAEDGLKGDTTGLALKRVTVETGGEVQVPIFIKQGDTVKIDLRDLSYVERVNK.

The protein belongs to the elongation factor P family.

The protein localises to the cytoplasm. The protein operates within protein biosynthesis; polypeptide chain elongation. In terms of biological role, involved in peptide bond synthesis. Stimulates efficient translation and peptide-bond synthesis on native or reconstituted 70S ribosomes in vitro. Probably functions indirectly by altering the affinity of the ribosome for aminoacyl-tRNA, thus increasing their reactivity as acceptors for peptidyl transferase. This Leptospira biflexa serovar Patoc (strain Patoc 1 / Ames) protein is Elongation factor P.